Here is a 449-residue protein sequence, read N- to C-terminus: FAD-linked oxidoreductase janO (449 aa).

The FAD-binding PCMH-type domain maps to 32–203 (PDAQPLAIIK…TRFHLNTRPL (172 aa)).

The protein belongs to the oxygen-dependent FAD-linked oxidoreductase family. FAD is required as a cofactor.

It functions in the pathway secondary metabolite biosynthesis. Its function is as follows. FAD-linked oxidoreductase; part of the gene cluster that mediates the biosynthesis of the indole diterpenes janthitremanes such as shearinine K or shearinine A. The geranylgeranyl diphosphate (GGPP) synthase janG catalyzes the first step in janthitremane biosynthesis via conversion of farnesyl pyrophosphate and isopentyl pyrophosphate into geranylgeranyl pyrophosphate (GGPP). Condensation of indole-3-glycerol phosphate with GGPP by the prenyl transferase janC then forms 3-geranylgeranylindole (3-GGI). Epoxidation by the FAD-dependent monooxygenase janM leads to a epoxidized-GGI that is substrate of the terpene cyclase janB for cyclization to yield paspaline. Paspaline is subsequently converted to 13-desoxypaspaline by the cytochrome P450 monooxygenase janP, via beta-PC-M6 in a series of alpha-face oxidations. The cytochrome P450 monooxygenase janQ is proposed to carry out sequential beta-face oxidation steps at C-7 and C-13 of 13-desoxypaspaline to form paspalicine and paspalinine respectively. The indole diterpene prenyltransferase janD may then convert paspalinine into shearinine K which is substrate of janO and/or additional enzymes for oxidation and cyclization to generate shearinine A. The sequence is that of FAD-linked oxidoreductase janO from Penicillium janthinellum (Penicillium vitale).